The chain runs to 90 residues: Small ribosomal subunit protein bS18 (90 aa).

Belongs to the bacterial ribosomal protein bS18 family. In terms of assembly, part of the 30S ribosomal subunit. Forms a tight heterodimer with protein bS6.

Functionally, binds as a heterodimer with protein bS6 to the central domain of the 16S rRNA, where it helps stabilize the platform of the 30S subunit. This chain is Small ribosomal subunit protein bS18, found in Bacteroides thetaiotaomicron (strain ATCC 29148 / DSM 2079 / JCM 5827 / CCUG 10774 / NCTC 10582 / VPI-5482 / E50).